Reading from the N-terminus, the 140-residue chain is MSFASEFKAFALKGNVVDLAVGVIIGAAFGKIVDSIVNDLVMPVVGAIFGGFDFKDYFVALKEIPPGVPHALDAVKKAGVPVFAYGSFLTIVLNFLILAFIIFLMVKQFNRMKRAEPAPAPAAPPEQVVLLREIRDALRR.

The next 2 helical transmembrane spans lie at 9–29 (AFAL…GAAF) and 86–106 (GSFL…FLMV).

Belongs to the MscL family. In terms of assembly, homopentamer.

The protein localises to the cell inner membrane. In terms of biological role, channel that opens in response to stretch forces in the membrane lipid bilayer. May participate in the regulation of osmotic pressure changes within the cell. The protein is Large-conductance mechanosensitive channel of Anaeromyxobacter dehalogenans (strain 2CP-1 / ATCC BAA-258).